The chain runs to 212 residues: Cytidylate kinase (212 aa).

7-15 contacts ATP; sequence GPAASGKGT.

Belongs to the cytidylate kinase family. Type 1 subfamily.

The protein resides in the cytoplasm. It carries out the reaction CMP + ATP = CDP + ADP. The enzyme catalyses dCMP + ATP = dCDP + ADP. In Bradyrhizobium diazoefficiens (strain JCM 10833 / BCRC 13528 / IAM 13628 / NBRC 14792 / USDA 110), this protein is Cytidylate kinase.